Consider the following 568-residue polypeptide: Kinetochore protein NDC80 homolog (568 aa).

The tract at residues Met-1–Asp-59 is disordered. The span at Gln-28–Asp-39 shows a compositional bias: basic and acidic residues. The segment covering Ala-40 to Ser-49 has biased composition (low complexity). 2 coiled-coil regions span residues Lys-241–Ala-334 and Ile-433–Asp-469.

The protein belongs to the NDC80/HEC1 family. Component of the NDC80 complex, which consists of NDC80, NUF2, SPC24 and SPC25.

The protein localises to the chromosome. It localises to the centromere. Acts as a component of the essential kinetochore-associated NDC80 complex, which is required for chromosome segregation and spindle checkpoint activity to ensure proper cell division. The chain is Kinetochore protein NDC80 homolog from Arabidopsis thaliana (Mouse-ear cress).